The chain runs to 310 residues: DNA damage-repair/toleration protein DRT102 (310 aa).

Position 2 is an N-acetylalanine (A2). The 64-residue stretch at 219 to 282 (IVRFKAGSVE…HRVKYHEDTE (64 aa)) folds into the Cupin type-2 domain.

The polypeptide is DNA damage-repair/toleration protein DRT102 (DRT102) (Arabidopsis thaliana (Mouse-ear cress)).